The chain runs to 289 residues: Bifunctional protein FolD (289 aa).

Residues 166 to 168, S191, and I232 each bind NADP(+); that span reads GRS.

Belongs to the tetrahydrofolate dehydrogenase/cyclohydrolase family. As to quaternary structure, homodimer.

It catalyses the reaction (6R)-5,10-methylene-5,6,7,8-tetrahydrofolate + NADP(+) = (6R)-5,10-methenyltetrahydrofolate + NADPH. The catalysed reaction is (6R)-5,10-methenyltetrahydrofolate + H2O = (6R)-10-formyltetrahydrofolate + H(+). The protein operates within one-carbon metabolism; tetrahydrofolate interconversion. Its function is as follows. Catalyzes the oxidation of 5,10-methylenetetrahydrofolate to 5,10-methenyltetrahydrofolate and then the hydrolysis of 5,10-methenyltetrahydrofolate to 10-formyltetrahydrofolate. The polypeptide is Bifunctional protein FolD (Synechococcus sp. (strain JA-3-3Ab) (Cyanobacteria bacterium Yellowstone A-Prime)).